The sequence spans 256 residues: DNA repair protein RecO (256 aa).

This sequence belongs to the RecO family.

In terms of biological role, involved in DNA repair and RecF pathway recombination. The sequence is that of DNA repair protein RecO from Thiobacillus denitrificans (strain ATCC 25259 / T1).